Here is a 574-residue protein sequence, read N- to C-terminus: MQARKYLFSTLKETPHNSDCISHALMLRAGIIRQNTSGTYIWLPTGLRILKKVIRIIKNEMKQCGAMEIAMPFLQKKNLWDLSKRVITYGQELFQVTDRTNKKFILGPTHEEMITYFIKNELQSYKQLPLILYQIQTKFRDEIRPRFGIIRTKEFMMKDAYSFHINMLSLEKTYNLMYQTYIKIFKKMKLKFYAVEADSGLMGGLKSHEFQAPSNTGEDVIVLSTQSNYLANIQVATSIQNNHIKYSTNNYFKKIKILRNNNDIYKKLSNTPNFKKSNTIKTILVKTKNFSKHLFVAILIREDHTINEYKLSKINEIEYPLIFASKQEILNVTGTTKDFIGPINLDFPVIADFSVINLENFTIGSNITNKYFNNMNWNKDISIPQTYDIRYVLEGDPSPDGAGELKMQKSIEIAHIFQLGKKYSKIMNVKIQNKIGKKDTLIMGCYGIGITRIIAAIIEQNNDKNGIIWPDSIAPFTIAIIPVCFHKSTLVKQQSEKIYNFCKKNNIDALLDDRKQNLSITLSEIELIGIPYSIIISEKLLKNDMVEYRERHKNVKKIINKNHVFKIILNNSLK.

It belongs to the class-II aminoacyl-tRNA synthetase family. ProS type 1 subfamily. In terms of assembly, homodimer.

The protein resides in the cytoplasm. The catalysed reaction is tRNA(Pro) + L-proline + ATP = L-prolyl-tRNA(Pro) + AMP + diphosphate. In terms of biological role, catalyzes the attachment of proline to tRNA(Pro) in a two-step reaction: proline is first activated by ATP to form Pro-AMP and then transferred to the acceptor end of tRNA(Pro). As ProRS can inadvertently accommodate and process non-cognate amino acids such as alanine and cysteine, to avoid such errors it has two additional distinct editing activities against alanine. One activity is designated as 'pretransfer' editing and involves the tRNA(Pro)-independent hydrolysis of activated Ala-AMP. The other activity is designated 'posttransfer' editing and involves deacylation of mischarged Ala-tRNA(Pro). The misacylated Cys-tRNA(Pro) is not edited by ProRS. The sequence is that of Proline--tRNA ligase from Buchnera aphidicola subsp. Baizongia pistaciae (strain Bp).